The chain runs to 90 residues: ATP synthase subunit c (90 aa).

The next 2 membrane-spanning stretches (helical) occupy residues 4 to 24 (FVYS…GCGI) and 53 to 73 (IGLA…LILI).

Belongs to the ATPase C chain family. In terms of assembly, F-type ATPases have 2 components, F(1) - the catalytic core - and F(0) - the membrane proton channel. F(1) has five subunits: alpha(3), beta(3), gamma(1), delta(1), epsilon(1). F(0) has three main subunits: a(1), b(2) and c(10-14). The alpha and beta chains form an alternating ring which encloses part of the gamma chain. F(1) is attached to F(0) by a central stalk formed by the gamma and epsilon chains, while a peripheral stalk is formed by the delta and b chains.

It is found in the cell inner membrane. F(1)F(0) ATP synthase produces ATP from ADP in the presence of a proton or sodium gradient. F-type ATPases consist of two structural domains, F(1) containing the extramembraneous catalytic core and F(0) containing the membrane proton channel, linked together by a central stalk and a peripheral stalk. During catalysis, ATP synthesis in the catalytic domain of F(1) is coupled via a rotary mechanism of the central stalk subunits to proton translocation. Its function is as follows. Key component of the F(0) channel; it plays a direct role in translocation across the membrane. A homomeric c-ring of between 10-14 subunits forms the central stalk rotor element with the F(1) delta and epsilon subunits. The polypeptide is ATP synthase subunit c (Syntrophobacter fumaroxidans (strain DSM 10017 / MPOB)).